Here is a 2036-residue protein sequence, read N- to C-terminus: Ral GTPase-activating protein subunit alpha-1 (2036 aa).

2 disordered regions span residues 343 to 384 (LVSR…SSLC) and 476 to 497 (EEGE…RNSS). Over residues 345–365 (SREESKNDNADKTDRTTEPEQ) the composition is skewed to basic and acidic residues. 2 stretches are compositionally biased toward polar residues: residues 366–384 (SHSN…SSLC) and 486–497 (GTNTADHVRNSS). Phosphoserine is present on residues Ser-711 and Ser-721. Positions 715 to 753 (SFSRGWSRDQPGQAPMRQRSATTTGSPGTEKARSIVRQK) are disordered. Phosphothreonine is present on Thr-754. At Ser-773 the chain carries Phosphoserine. At Thr-778 the chain carries Phosphothreonine. Ser-797, Ser-860, Ser-861, and Ser-864 each carry phosphoserine. Disordered regions lie at residues 849-910 (SGNA…SDSH) and 982-1009 (TITG…STLN). Residues 850 to 863 (GNASTMTRRGSSPG) show a composition bias toward polar residues. Over residues 895-910 (SPASAGSSDLISSDSH) the composition is skewed to low complexity. The span at 983–1009 (ITGSESASPVHSPLGSRSQTPSPSTLN) shows a compositional bias: polar residues. Ser-986, Ser-990, Ser-994, and Ser-1000 each carry phosphoserine. Residue Thr-1002 is modified to Phosphothreonine. Phosphoserine occurs at positions 1004 and 1478. The interval 1327–2035 (FTNKTVAHVA…PYHHLPSDAD (709 aa)) is minimal domain that binds to TCF3/E12. Positions 1716-1744 (KQENDVINAILKQHTEEKEFVEKHFNDLN) form a coiled coil. In terms of domain architecture, Rap-GAP spans 1796 to 2004 (LRNLDSRQCR…EERARYLQTI (209 aa)).

As to quaternary structure, component of the heterodimeric RalGAP1 complex with RALGAPB. Heterodimerization is required for activity. Interacts with the HLH region of TCF3/isoform E12. As to expression, widely expressed.

The protein resides in the cytoplasm. The protein localises to the nucleus. Functionally, catalytic subunit of the heterodimeric RalGAP1 complex which acts as a GTPase activator for the Ras-like small GTPases RALA and RALB. In Homo sapiens (Human), this protein is Ral GTPase-activating protein subunit alpha-1 (RALGAPA1).